The primary structure comprises 298 residues: Protease HtpX homolog (298 aa).

A run of 2 helical transmembrane segments spans residues 15 to 35 (LIMV…GYLF) and 39 to 59 (PWMG…IMWQ). A Zn(2+)-binding site is contributed by H143. The active site involves E144. H147 contacts Zn(2+). A run of 2 helical transmembrane segments spans residues 153-173 (ILLS…SGMA) and 197-217 (MIFK…SASL). E227 is a binding site for Zn(2+).

Belongs to the peptidase M48B family. Requires Zn(2+) as cofactor.

It localises to the cell membrane. The protein is Protease HtpX homolog of Lactobacillus helveticus (strain DPC 4571).